We begin with the raw amino-acid sequence, 91 residues long: Small ribosomal subunit protein uS19 (91 aa).

The protein belongs to the universal ribosomal protein uS19 family.

Functionally, protein S19 forms a complex with S13 that binds strongly to the 16S ribosomal RNA. The protein is Small ribosomal subunit protein uS19 of Colwellia psychrerythraea (strain 34H / ATCC BAA-681) (Vibrio psychroerythus).